The sequence spans 348 residues: Protein RecA (348 aa).

Residue Gly-67–Thr-74 coordinates ATP.

Belongs to the RecA family.

The protein resides in the cytoplasm. Can catalyze the hydrolysis of ATP in the presence of single-stranded DNA, the ATP-dependent uptake of single-stranded DNA by duplex DNA, and the ATP-dependent hybridization of homologous single-stranded DNAs. It interacts with LexA causing its activation and leading to its autocatalytic cleavage. The sequence is that of Protein RecA from Salinispora arenicola (strain CNS-205).